The primary structure comprises 182 residues: Small ribosomal subunit protein uS9 (182 aa).

It belongs to the universal ribosomal protein uS9 family.

The polypeptide is Small ribosomal subunit protein uS9 (Corynebacterium efficiens (strain DSM 44549 / YS-314 / AJ 12310 / JCM 11189 / NBRC 100395)).